The following is a 504-amino-acid chain: Aromatic and large neutral amino acid transporter 5-3 (504 aa).

The interval 1–24 is disordered; it reads MESTEATMVERKAESPSSGDRARS. Basic and acidic residues predominate over residues 8–24; sequence MVERKAESPSSGDRARS. 6 helical membrane passes run 76–96, 138–158, 165–185, 206–226, 233–253, and 256–276; these read YVVL…FMNW, HLFT…GIML, FGAL…GFSS, FFPC…IIAV, ISFI…GATF, and VMLG…LFII. Residue Asn310 is glycosylated (N-linked (GlcNAc...) asparagine). 6 consecutive transmembrane segments (helical) span residues 324–344, 356–376, 381–401, 406–426, 436–456, and 475–495; these read LSFL…LFFA, EANQ…GGIA, IVPV…LMLI, CFAA…SFLV, IFYP…GGII, and MTVL…FMYV.

The protein belongs to the SLC43A transporter (TC 2.A.1.44) family.

It localises to the cell membrane. It carries out the reaction L-tyrosine(in) = L-tyrosine(out). With respect to regulation, L-tyrosine uptake is stimulated in trans by aromatic and large neutral amino acids, but not smaller or charged amino acids. Its function is as follows. L-tyrosine transporter that is essential for parasite survival and virulence. May also act as an aromatic and large neutral amino acid transporter. Does not cotransport other charged ions. Involved in amino acid homeostasis by facilitating the net uptake of L-tyrosine and maintaining intracellular pools of aromatic and large neutral amino acids through exchange. The protein is Aromatic and large neutral amino acid transporter 5-3 of Toxoplasma gondii.